Here is a 460-residue protein sequence, read N- to C-terminus: Bifunctional protein GlmU (460 aa).

The segment at 1–229 (MTNYAIILAA…FNESLGVNDR (229 aa)) is pyrophosphorylase. Residues 8 to 11 (LAAG), Lys-22, Gln-72, and 77 to 78 (GT) contribute to the UDP-N-acetyl-alpha-D-glucosamine site. Asp-102 provides a ligand contact to Mg(2+). UDP-N-acetyl-alpha-D-glucosamine contacts are provided by Gly-139, Glu-154, Asn-169, and Asn-227. Position 227 (Asn-227) interacts with Mg(2+). Residues 230 to 250 (VALATAETVMRQRITQKHMVN) are linker. An N-acetyltransferase region spans residues 251-460 (GVTFQNPETV…RLAHHPSRSK (210 aa)). The UDP-N-acetyl-alpha-D-glucosamine site is built by Arg-332 and Lys-350. His-362 acts as the Proton acceptor in catalysis. UDP-N-acetyl-alpha-D-glucosamine contacts are provided by Tyr-365 and Asn-376. Acetyl-CoA-binding positions include Ala-379, 385 to 386 (NY), Ser-404, Ala-422, and Arg-439.

The protein in the N-terminal section; belongs to the N-acetylglucosamine-1-phosphate uridyltransferase family. It in the C-terminal section; belongs to the transferase hexapeptide repeat family. Homotrimer. It depends on Mg(2+) as a cofactor.

The protein localises to the cytoplasm. It carries out the reaction alpha-D-glucosamine 1-phosphate + acetyl-CoA = N-acetyl-alpha-D-glucosamine 1-phosphate + CoA + H(+). The enzyme catalyses N-acetyl-alpha-D-glucosamine 1-phosphate + UTP + H(+) = UDP-N-acetyl-alpha-D-glucosamine + diphosphate. The protein operates within nucleotide-sugar biosynthesis; UDP-N-acetyl-alpha-D-glucosamine biosynthesis; N-acetyl-alpha-D-glucosamine 1-phosphate from alpha-D-glucosamine 6-phosphate (route II): step 2/2. It functions in the pathway nucleotide-sugar biosynthesis; UDP-N-acetyl-alpha-D-glucosamine biosynthesis; UDP-N-acetyl-alpha-D-glucosamine from N-acetyl-alpha-D-glucosamine 1-phosphate: step 1/1. Its pathway is bacterial outer membrane biogenesis; LPS lipid A biosynthesis. In terms of biological role, catalyzes the last two sequential reactions in the de novo biosynthetic pathway for UDP-N-acetylglucosamine (UDP-GlcNAc). The C-terminal domain catalyzes the transfer of acetyl group from acetyl coenzyme A to glucosamine-1-phosphate (GlcN-1-P) to produce N-acetylglucosamine-1-phosphate (GlcNAc-1-P), which is converted into UDP-GlcNAc by the transfer of uridine 5-monophosphate (from uridine 5-triphosphate), a reaction catalyzed by the N-terminal domain. This chain is Bifunctional protein GlmU, found in Streptococcus pyogenes serotype M5 (strain Manfredo).